The sequence spans 513 residues: Maturase K (513 aa).

It belongs to the intron maturase 2 family. MatK subfamily.

It is found in the plastid. The protein localises to the chloroplast. Its function is as follows. Usually encoded in the trnK tRNA gene intron. Probably assists in splicing its own and other chloroplast group II introns. This Danthonia spicata (Poverty oatgrass) protein is Maturase K.